Here is a 287-residue protein sequence, read N- to C-terminus: Gliotoxin thiomethyltransferase GtmA (287 aa).

The S-adenosyl-L-methionine site is built by threonine 27 and alanine 54. Cysteine 55 and cysteine 80 form a disulfide bridge. Positions 82, 87, 109, 110, 126, and 248 each coordinate S-adenosyl-L-methionine.

The protein belongs to the class I-like SAM-binding methyltransferase superfamily.

It localises to the cytoplasm. It catalyses the reaction a thiol + S-adenosyl-L-methionine = a methyl thioether + S-adenosyl-L-homocysteine + H(+). Its function is as follows. S-methyltransferase that catalyzes the irreversible conversion of the secondary metabolite gliotoxin to bis(methylthio)gliotoxin (BmGT). Gliotoxin, a member of the epipolythiodioxopiperazine (ETP) class of toxins, is characterized by a disulfide bridged cyclic dipeptide. Its thiol groups are essential for bioactivity, as they conjugate to sulfur-containing proteins, disturb the intracellular redox equilibrium, and generate reactive oxygen species by cycling between reduced and oxidized states. The enzyme prevents self-intoxication of the fungus by irreversible conversion of the toxic gliotoxin to a biologically inactive bis-thiomethylated derivative. Appears to negatively regulate gliotoxin biosynthesis. This chain is Gliotoxin thiomethyltransferase GtmA, found in Aspergillus fumigatus (strain ATCC MYA-4609 / CBS 101355 / FGSC A1100 / Af293) (Neosartorya fumigata).